We begin with the raw amino-acid sequence, 208 residues long: Small ribosomal subunit protein uS4 (208 aa).

The region spanning 95 to 159 is the S4 RNA-binding domain; sequence RRIDNIVYRA…FKKLVRSNIE (65 aa).

This sequence belongs to the universal ribosomal protein uS4 family. As to quaternary structure, part of the 30S ribosomal subunit. Contacts protein S5. The interaction surface between S4 and S5 is involved in control of translational fidelity.

One of the primary rRNA binding proteins, it binds directly to 16S rRNA where it nucleates assembly of the body of the 30S subunit. Functionally, with S5 and S12 plays an important role in translational accuracy. This chain is Small ribosomal subunit protein uS4, found in Borrelia recurrentis (strain A1).